The following is a 283-amino-acid chain: 4-diphosphocytidyl-2-C-methyl-D-erythritol kinase (283 aa).

Lys-8 is an active-site residue. 90-100 (PIGSGLAGGSS) serves as a coordination point for ATP. Asp-132 is an active-site residue.

This sequence belongs to the GHMP kinase family. IspE subfamily.

It catalyses the reaction 4-CDP-2-C-methyl-D-erythritol + ATP = 4-CDP-2-C-methyl-D-erythritol 2-phosphate + ADP + H(+). It functions in the pathway isoprenoid biosynthesis; isopentenyl diphosphate biosynthesis via DXP pathway; isopentenyl diphosphate from 1-deoxy-D-xylulose 5-phosphate: step 3/6. In terms of biological role, catalyzes the phosphorylation of the position 2 hydroxy group of 4-diphosphocytidyl-2C-methyl-D-erythritol. The sequence is that of 4-diphosphocytidyl-2-C-methyl-D-erythritol kinase from Chlamydia muridarum (strain MoPn / Nigg).